The following is a 320-amino-acid chain: Tabersonine synthase (320 aa).

Residues H78–A80 carry the Involved in the stabilization of the negatively charged intermediate by the formation of the oxyanion hole motif. Residue G81 participates in (-)-tabersonine binding. S170 (proton acceptor) is an active-site residue. The active site involves D266. Y297 serves as a coordination point for (-)-tabersonine. Y297 functions as the Proton donor/acceptor in the catalytic mechanism.

Belongs to the 'GDXG' lipolytic enzyme family. As to quaternary structure, interacts with dehydroprecondylocarpine acetate synthase (DPAS). In terms of tissue distribution, expressed in leaf epidermis.

It is found in the cytoplasm. It localises to the cytosol. The protein resides in the nucleus. The catalysed reaction is dehydrosecodine = (-)-tabersonine. The enzyme catalyses dihydroprecondylocarpine acetate = (-)-tabersonine + acetate + H(+). It participates in alkaloid biosynthesis. Its function is as follows. Component of iboga and aspidosperma monoterpenoid indole alkaloids (MIAs, e.g. tabersonine and catharanthine) biosynthesis pathway from 19E-geissoschizine, psychoactive compounds likely to be used in the treatment of opioid dependence. Catalyzes the conversion of dehydrosecodine to tabersonine, a precursor of vindoline; this process starts with the conversion of dihydroprecondylocarpine acetate to dehydrosecodine. This Catharanthus roseus (Madagascar periwinkle) protein is Tabersonine synthase.